A 418-amino-acid chain; its full sequence is Ciliary microtubule-associated protein 2 (418 aa).

In terms of tissue distribution, sperm.

This is Ciliary microtubule-associated protein 2 from Homo sapiens (Human).